We begin with the raw amino-acid sequence, 107 residues long: Putative pterin-4-alpha-carbinolamine dehydratase (107 aa).

The protein belongs to the pterin-4-alpha-carbinolamine dehydratase family.

It catalyses the reaction (4aS,6R)-4a-hydroxy-L-erythro-5,6,7,8-tetrahydrobiopterin = (6R)-L-erythro-6,7-dihydrobiopterin + H2O. The protein is Putative pterin-4-alpha-carbinolamine dehydratase of Rubrobacter xylanophilus (strain DSM 9941 / JCM 11954 / NBRC 16129 / PRD-1).